Here is a 480-residue protein sequence, read N- to C-terminus: tRNA-2-methylthio-N(6)-dimethylallyladenosine synthase (480 aa).

The MTTase N-terminal domain occupies 29–145 (GSFWIQTFGC…LEALLTQVDN (117 aa)). [4Fe-4S] cluster is bound by residues cysteine 38, cysteine 74, cysteine 108, cysteine 180, cysteine 184, and cysteine 187. Residues 166-403 (RDSTICAWVN…NALVERIALQ (238 aa)) enclose the Radical SAM core domain. The 69-residue stretch at 406 to 474 (SRYSGKVEQV…AFSLSGTPCE (69 aa)) folds into the TRAM domain.

The protein belongs to the methylthiotransferase family. MiaB subfamily. Monomer. [4Fe-4S] cluster is required as a cofactor.

The protein resides in the cytoplasm. It catalyses the reaction N(6)-dimethylallyladenosine(37) in tRNA + (sulfur carrier)-SH + AH2 + 2 S-adenosyl-L-methionine = 2-methylsulfanyl-N(6)-dimethylallyladenosine(37) in tRNA + (sulfur carrier)-H + 5'-deoxyadenosine + L-methionine + A + S-adenosyl-L-homocysteine + 2 H(+). Its function is as follows. Catalyzes the methylthiolation of N6-(dimethylallyl)adenosine (i(6)A), leading to the formation of 2-methylthio-N6-(dimethylallyl)adenosine (ms(2)i(6)A) at position 37 in tRNAs that read codons beginning with uridine. The protein is tRNA-2-methylthio-N(6)-dimethylallyladenosine synthase of Prochlorococcus marinus (strain MIT 9313).